An 841-amino-acid chain; its full sequence is Probable outer membrane usher protein EcpC (841 aa).

The signal sequence occupies residues 1 to 29 (MPLRRFSPGLKAQFAFGMVFLFVQPDASA).

The protein belongs to the EcpC/MatD family.

Functionally, part of the ecpRABCDE operon, which encodes the E.coli common pilus (ECP). ECP is found in both commensal and pathogenic strains and plays a dual role in early-stage biofilm development and host cell recognition. This Escherichia coli O157:H7 protein is Probable outer membrane usher protein EcpC (ecpC).